We begin with the raw amino-acid sequence, 192 residues long: MTETLETPVKIVPRLKTKYAETIKKSLQDEFSYANVNQVPRLVKVVVNMGVGDAAKDSKLIDGAVRDLTLITGQKPQVTKARKSIAQFKLREGMPIGAHATLRGDRMWEFVDRLVSLALPRIRDFRGLNGKQFDGNGNYTFGLTEQVMFHEIDQDSIDRVRGMDITVVTTAKTDDEGRALLKALGFPFKTEN.

The protein belongs to the universal ribosomal protein uL5 family. In terms of assembly, part of the 50S ribosomal subunit; part of the 5S rRNA/L5/L18/L25 subcomplex. Contacts the 5S rRNA and the P site tRNA. Forms a bridge to the 30S subunit in the 70S ribosome.

In terms of biological role, this is one of the proteins that bind and probably mediate the attachment of the 5S RNA into the large ribosomal subunit, where it forms part of the central protuberance. In the 70S ribosome it contacts protein S13 of the 30S subunit (bridge B1b), connecting the 2 subunits; this bridge is implicated in subunit movement. Contacts the P site tRNA; the 5S rRNA and some of its associated proteins might help stabilize positioning of ribosome-bound tRNAs. In Paenarthrobacter aurescens (strain TC1), this protein is Large ribosomal subunit protein uL5.